We begin with the raw amino-acid sequence, 425 residues long: Serine/threonine transporter SstT (425 aa).

Helical transmembrane passes span 11–31 (FLNG…LILA), 43–63 (FLGS…VFVL), 91–111 (LFAA…LVLV), 141–161 (ALVS…GFAL), 182–202 (IVHL…AGTI), 216–236 (LLAV…PIIV), 290–310 (IPLG…VLTL), 316–336 (LGIE…AVSA), and 363–383 (VAMQ…SAET).

This sequence belongs to the dicarboxylate/amino acid:cation symporter (DAACS) (TC 2.A.23) family.

It is found in the cell inner membrane. It catalyses the reaction L-serine(in) + Na(+)(in) = L-serine(out) + Na(+)(out). The catalysed reaction is L-threonine(in) + Na(+)(in) = L-threonine(out) + Na(+)(out). Functionally, involved in the import of serine and threonine into the cell, with the concomitant import of sodium (symport system). This chain is Serine/threonine transporter SstT, found in Psychromonas ingrahamii (strain DSM 17664 / CCUG 51855 / 37).